A 98-amino-acid chain; its full sequence is Large ribosomal subunit protein bL28 (98 aa).

This sequence belongs to the bacterial ribosomal protein bL28 family.

The polypeptide is Large ribosomal subunit protein bL28 (Chelativorans sp. (strain BNC1)).